The primary structure comprises 422 residues: Adenylosuccinate synthetase (422 aa).

GTP contacts are provided by residues 11–17 (GDEGKGK) and 39–41 (GHT). Catalysis depends on D12, which acts as the Proton acceptor. 2 residues coordinate Mg(2+): D12 and G39. Residues 12–15 (DEGK), 37–40 (NAGH), T129, R143, N219, T234, and R298 contribute to the IMP site. H40 functions as the Proton donor in the catalytic mechanism. 294 to 300 (VTTGRKR) provides a ligand contact to substrate. GTP contacts are provided by residues R300, 326 to 328 (KLD), and 411 to 413 (GTG).

The protein belongs to the adenylosuccinate synthetase family. In terms of assembly, homodimer. It depends on Mg(2+) as a cofactor.

The protein localises to the cytoplasm. The catalysed reaction is IMP + L-aspartate + GTP = N(6)-(1,2-dicarboxyethyl)-AMP + GDP + phosphate + 2 H(+). It participates in purine metabolism; AMP biosynthesis via de novo pathway; AMP from IMP: step 1/2. Plays an important role in the de novo pathway and in the salvage pathway of purine nucleotide biosynthesis. Catalyzes the first committed step in the biosynthesis of AMP from IMP. The chain is Adenylosuccinate synthetase from Talaromyces marneffei (strain ATCC 18224 / CBS 334.59 / QM 7333) (Penicillium marneffei).